Here is a 241-residue protein sequence, read N- to C-terminus: HTH-type quorum-sensing regulator RhlR (241 aa).

In terms of domain architecture, HTH luxR-type spans 174–239 (LMSNPVCLSH…LAAAYAAALG (66 aa)). A DNA-binding region (H-T-H motif) is located at residues 198-217 (SGEIAIILSISESTVNFHHK).

The protein belongs to the autoinducer-regulated transcriptional regulatory protein family. As to quaternary structure, homodimer in the absence of any acyl-L-homoserine lactone. The presence of the autoinducer C4-HSL has no significant effect on dimerization whereas N-(3-oxododecanoyl)-L-homoserine lactone (3O-C12-HSL), the LasR inducer, is able to dissociate the RhlR homodimers into monomers.

It is found in the cytoplasm. With respect to regulation, activated by interaction with the autoinducer signal molecule N-butanoyl-L-homoserine lactone (C4-HSL or BHL), the product of the RhlI synthase. Is also activated by binding to rosmarinic acid (RA), a homoserine lactone mimic produced by plants, which induces a broad quorum sensing response, including the induction of all major quorum sensing controlled virulence factors. Rosmarinic acid secretion may be a plant defense mechanism to stimulate a premature quorum sensing response. Its function is as follows. Quorum-sensing regulator that controls the expression of multiple virulence factors in response to extracellular signaling molecules called autoinducers. Involved, among others, in the transcriptional regulation of genes that are responsible for rhamnolipid surfactant biosynthesis. Acts by binding to a specific sequence in the rhlAB regulatory region, both in the presence and in the absence of its autoinducer. In the former case it activates transcription of the promoter, whereas in the latter it acts as a transcriptional repressor. Also regulates the expression of the rmlBDAC operon, encoding dTDP-L-rhamnose biosynthetic enzymes, by binding to the rml box in the promoter region. In addition, is involved in the regulation of the production of elastase (lasB) and pyocyanine. This is HTH-type quorum-sensing regulator RhlR from Pseudomonas aeruginosa (strain ATCC 15692 / DSM 22644 / CIP 104116 / JCM 14847 / LMG 12228 / 1C / PRS 101 / PAO1).